Consider the following 631-residue polypeptide: Phosphomethylpyrimidine synthase (631 aa).

Residues N239, M268, Y297, H333, 353 to 355 (SRG), 394 to 397 (DGLR), and E433 contribute to the substrate site. Residue H437 coordinates Zn(2+). A substrate-binding site is contributed by Y460. H501 contributes to the Zn(2+) binding site. The [4Fe-4S] cluster site is built by C581, C584, and C589.

Belongs to the ThiC family. As to quaternary structure, homodimer. Requires [4Fe-4S] cluster as cofactor.

It catalyses the reaction 5-amino-1-(5-phospho-beta-D-ribosyl)imidazole + S-adenosyl-L-methionine = 4-amino-2-methyl-5-(phosphooxymethyl)pyrimidine + CO + 5'-deoxyadenosine + formate + L-methionine + 3 H(+). Its pathway is cofactor biosynthesis; thiamine diphosphate biosynthesis. Catalyzes the synthesis of the hydroxymethylpyrimidine phosphate (HMP-P) moiety of thiamine from aminoimidazole ribotide (AIR) in a radical S-adenosyl-L-methionine (SAM)-dependent reaction. This chain is Phosphomethylpyrimidine synthase, found in Shigella dysenteriae serotype 1 (strain Sd197).